The primary structure comprises 145 residues: Basic phospholipase A2 PC17 (145 aa).

The first 21 residues, 1-21 (MYPAHLLLLLAVCVSLLGASA), serve as a signal peptide directing secretion. A propeptide spanning residues 22-27 (IPPLPL) is cleaved from the precursor. Disulfide bonds link cysteine 38-cysteine 98, cysteine 54-cysteine 144, cysteine 56-cysteine 72, cysteine 71-cysteine 125, cysteine 78-cysteine 118, cysteine 87-cysteine 111, and cysteine 105-cysteine 116. 3 residues coordinate Ca(2+): tyrosine 55, glycine 57, and glycine 59. The active site involves histidine 75. Aspartate 76 provides a ligand contact to Ca(2+). Aspartate 119 is an active-site residue.

The protein belongs to the phospholipase A2 family. Group I subfamily. D49 sub-subfamily. The cofactor is Ca(2+).

Its subcellular location is the secreted. The enzyme catalyses a 1,2-diacyl-sn-glycero-3-phosphocholine + H2O = a 1-acyl-sn-glycero-3-phosphocholine + a fatty acid + H(+). Functionally, PLA2 catalyzes the calcium-dependent hydrolysis of the 2-acyl groups in 3-sn-phosphoglycerides. In Laticauda laticaudata (Blue-ringed sea krait), this protein is Basic phospholipase A2 PC17.